The sequence spans 692 residues: ATP-dependent RNA helicase MSS116, mitochondrial (692 aa).

Residues 1–37 constitute a mitochondrion transit peptide; sequence MMIARFGKQVLRKNVLVSNRIHFPVISRGFHNSFINK. The disordered stretch occupies residues 82–113; sequence SQVTEQTELTKSEEEEKKKKNINTNTNKNDRK. A compositionally biased stretch (basic and acidic residues) spans 89 to 99; the sequence is ELTKSEEEEKK. A Q motif motif is present at residues 130 to 158; sequence DFKNTGLIDDVILRALDRAHFKDLTPIQQ. The Helicase ATP-binding domain occupies 162–349; that stretch reads VPLLETERGM…KQHINKKYDY (188 aa). An ATP-binding site is contributed by 175-182; sequence AKTGTGKT. The DEAD box signature appears at 290–293; that stretch reads DEAD. Residues 384 to 534 form the Helicase C-terminal domain; it reads YVNQLVKDSP…QVHESSEIDN (151 aa). The interval 643–692 is disordered; it reads NRYSGGGGNRSEKRFSFAGRGGNSGGHSGRGRGGRSGYSGGRSSQYSDWE. A compositionally biased stretch (gly residues) spans 661–670; that stretch reads GRGGNSGGHS.

The protein belongs to the DEAD box helicase family. DDX18/HAS1 subfamily.

It is found in the mitochondrion matrix. The catalysed reaction is ATP + H2O = ADP + phosphate + H(+). Its function is as follows. ATP-dependent RNA helicase required for mitochondrial splicing of group I and II introns. Also required for efficient mitochondrial translation. The chain is ATP-dependent RNA helicase MSS116, mitochondrial (MSS116) from Lodderomyces elongisporus (strain ATCC 11503 / CBS 2605 / JCM 1781 / NBRC 1676 / NRRL YB-4239) (Yeast).